Consider the following 95-residue polypeptide: 6 kDa early secretory antigenic target homolog (95 aa).

It belongs to the WXG100 family. ESAT-6 subfamily. As to quaternary structure, forms a tight 1:1 complex with EsxB.

The protein localises to the secreted. Functionally, a secreted protein that might play a role in virulence. This chain is 6 kDa early secretory antigenic target homolog (esxA), found in Mycobacterium leprae (strain TN).